The chain runs to 275 residues: Undecaprenyl-diphosphatase (275 aa).

Helical transmembrane passes span 1–21, 41–61, 95–115, 118–138, 192–212, 223–243, and 255–275; these read MTTFKAILLGIVQGLTEFLPV, ILFLTILLHVGTLFSVFFVYA, LLIIVATIPTGIIGLFFKDLF, FYNSTLIIGISLLVTGTLLWT, ATKFSFLISIPAILGATVFEV, FTLTMLIAGVLASFLSGVFAI, and LYYFSYYTWTVGSIVILFSLL.

Belongs to the UppP family.

The protein resides in the cell membrane. It catalyses the reaction di-trans,octa-cis-undecaprenyl diphosphate + H2O = di-trans,octa-cis-undecaprenyl phosphate + phosphate + H(+). In terms of biological role, catalyzes the dephosphorylation of undecaprenyl diphosphate (UPP). Confers resistance to bacitracin. The sequence is that of Undecaprenyl-diphosphatase from Alkaliphilus metalliredigens (strain QYMF).